Consider the following 82-residue polypeptide: Penaeidin-3h (82 aa).

An N-terminal signal peptide occupies residues 1–19 (MRLVVCLVFLASFALVCQG). At Q20 the chain carries Pyrrolidone carboxylic acid. 2 cysteine pairs are disulfide-bonded: C55–C73 and C67–C74. S81 is subject to Serine amide.

This sequence belongs to the penaeidin family.

It localises to the cytoplasmic granule. Its function is as follows. Antibacterial and antifungal activity. Presents chitin-binding activity. In Penaeus vannamei (Whiteleg shrimp), this protein is Penaeidin-3h.